Here is a 642-residue protein sequence, read N- to C-terminus: Sterol O-acyltransferase 2 (642 aa).

Residues 174-194 (KSSPDAVDSVGKNDGAAPTTV) form a disordered region. Residues Ser175 and Ser176 each carry the phosphoserine modification. The next 5 helical transmembrane spans lie at 215-235 (FSGL…KALI), 292-312 (TGWI…MYLT), 404-424 (ISAK…QIEY), 442-462 (IFGT…PVAM), and 485-505 (LLVD…YLIW). The FYXDWWN motif motif lies at 523 to 529 (FYGDWWN). 2 helical membrane passes run 567 to 587 (ATLM…YVIF) and 622 to 642 (VIFW…YLTF). Residue His579 is part of the active site.

Belongs to the membrane-bound acyltransferase family. Sterol o-acyltransferase subfamily.

Its subcellular location is the endoplasmic reticulum membrane. The enzyme catalyses ergosterol + an acyl-CoA = ergosteryl ester + CoA. The catalysed reaction is zymosterol + an acyl-CoA = zymosterol ester + CoA. Its function is as follows. Sterol O-acyltransferase that catalyzes the formation of stery esters. The sequence is that of Sterol O-acyltransferase 2 from Saccharomyces cerevisiae (strain ATCC 204508 / S288c) (Baker's yeast).